A 425-amino-acid chain; its full sequence is Phosphoribosylamine--glycine ligase (425 aa).

In terms of domain architecture, ATP-grasp spans 107-312 (KDLCARYNIP…LLVLLNAAVD (206 aa)). Residue 133 to 193 (VDQTGAPIVI…EEFMTGEEAS (61 aa)) coordinates ATP. The tract at residues 214–233 (RVGDGDVGPNTGGMGAYSPA) is disordered. Mg(2+) is bound by residues Glu-282 and Asn-284.

The protein belongs to the GARS family. Mg(2+) is required as a cofactor. The cofactor is Mn(2+).

The enzyme catalyses 5-phospho-beta-D-ribosylamine + glycine + ATP = N(1)-(5-phospho-beta-D-ribosyl)glycinamide + ADP + phosphate + H(+). The protein operates within purine metabolism; IMP biosynthesis via de novo pathway; N(1)-(5-phospho-D-ribosyl)glycinamide from 5-phospho-alpha-D-ribose 1-diphosphate: step 2/2. This is Phosphoribosylamine--glycine ligase from Mesorhizobium japonicum (strain LMG 29417 / CECT 9101 / MAFF 303099) (Mesorhizobium loti (strain MAFF 303099)).